We begin with the raw amino-acid sequence, 456 residues long: MESQSQRGQHETPKRSRFTGMFHKLKTNLVFRSKLAEINGAMGDLGTYIPIVLALTLAKDLDLGTTLIFTGIYNAITGAVYGVPMPVQPMKSIAAVAISSTAEDFGIPEIMAAGICTGGILFVLGISGLMQLVFNIIPLSVVRGIQLSQGLAFAMSAVKYIRKEQNFSKSKSVGDRPWLGLDGLVLALVCVLFIVLVNGDGEEEEEEEEGDGSRGRGRWGSVRKVIANVPSALLIFLLGVVLAFIRKPSIVHDIKFGPSKMKIVRISRKAWRNGFLKGTVPQLPLSVLNSVVAVCKLSYDLFPEKEFSAASVSMTVGLMNMVGCWFGAMPTCHGAGGLAGQYKFGGRSGGCVALLGVAKLVLGLVLGGSLVGILEKFPVGVLGALLLFAGVELAMAARDMNTKGDAFVMLMCTSVSLGSNAAIGFVAGDLLYVVLWMRNYGRAKPSSLPPQSGEHA.

A run of 9 helical transmembrane segments spans residues 67–87 (LIFT…PMPV), 110–130 (IMAA…SGLM), 133–153 (VFNI…GLAF), 177–197 (PWLG…IVLV), 225–245 (VIAN…LAFI), 309–329 (AASV…FGAM), 354–374 (LLGV…VGIL), 377–397 (FPVG…AMAA), and 417–437 (LGSN…VLWM).

This sequence belongs to the SLC26A/SulP transporter (TC 2.A.53) family. Strongly expressed in roots. Detected in the vascular tissues of hypocotyls, in petioles and vascular tissues of cotyledons and leaves, in mesophyll cells, stamen, sepals and siliques.

It localises to the cell membrane. The protein resides in the endomembrane system. The protein localises to the mitochondrion membrane. With respect to regulation, not inhibited by sulfate. Functionally, high affinity molybdate transporter. Unable to transport sulfate. This Arabidopsis thaliana (Mouse-ear cress) protein is Molybdate transporter 1 (MOT1).